Consider the following 214-residue polypeptide: Cell division protein SepF (214 aa).

Positions E25–G51 are disordered.

Belongs to the SepF family. As to quaternary structure, homodimer. Interacts with FtsZ.

Its subcellular location is the cytoplasm. Cell division protein that is part of the divisome complex and is recruited early to the Z-ring. Probably stimulates Z-ring formation, perhaps through the cross-linking of FtsZ protofilaments. Its function overlaps with FtsA. This chain is Cell division protein SepF, found in Mycolicibacterium smegmatis (strain ATCC 700084 / mc(2)155) (Mycobacterium smegmatis).